The chain runs to 128 residues: uncharacterized protein (128 aa).

This is an uncharacterized protein from Mycoplasma pneumoniae (strain ATCC 29342 / M129 / Subtype 1) (Mycoplasmoides pneumoniae).